A 677-amino-acid polypeptide reads, in one-letter code: Methionine--tRNA ligase (677 aa).

Positions 15–25 (PYANGSIHLGH) match the 'HIGH' region motif. Cysteine 146, cysteine 149, cysteine 159, and cysteine 162 together coordinate Zn(2+). Positions 333 to 337 (KMSKS) match the 'KMSKS' region motif. Lysine 336 is a binding site for ATP. Residues 575-677 (DFAKVDLRVA…AGAKPGHQVK (103 aa)) form the tRNA-binding domain.

The protein belongs to the class-I aminoacyl-tRNA synthetase family. MetG type 1 subfamily. As to quaternary structure, homodimer. Zn(2+) serves as cofactor.

It localises to the cytoplasm. The enzyme catalyses tRNA(Met) + L-methionine + ATP = L-methionyl-tRNA(Met) + AMP + diphosphate. Its function is as follows. Is required not only for elongation of protein synthesis but also for the initiation of all mRNA translation through initiator tRNA(fMet) aminoacylation. This is Methionine--tRNA ligase from Escherichia coli O17:K52:H18 (strain UMN026 / ExPEC).